The sequence spans 492 residues: Regulatory protein ViaA (492 aa).

It belongs to the ViaA family. In terms of assembly, homodimer. Interacts with RavA.

It localises to the cytoplasm. Component of the RavA-ViaA chaperone complex, which may act on the membrane to optimize the function of some of the respiratory chains. ViaA stimulates the ATPase activity of RavA. This is Regulatory protein ViaA from Pectobacterium atrosepticum (strain SCRI 1043 / ATCC BAA-672) (Erwinia carotovora subsp. atroseptica).